Consider the following 393-residue polypeptide: Nucleoside permease NupC (393 aa).

Helical transmembrane passes span 3-23 (YLIGIIGLIVFLGLAWIASSG), 32-52 (IVVMLILQFILGYILLNTGIG), 87-107 (TTFFMNVLLPIVFISALIGIL), 168-188 (LCASAMSTVSMSIVGAYMTML), 191-211 (EYVVTALVLNLFGGFIIASII), 249-269 (VVVAAMLIGFVAIIALINGIF), 272-292 (VFGISFQGILGYVFAPFAFLV), 334-354 (AIVSVFLVSFANFSSIGIIAG), and 372-392 (LKLLYGATLVSFLSAAIVGLI).

This sequence belongs to the concentrative nucleoside transporter (CNT) (TC 2.A.41) family.

It localises to the cell membrane. Functionally, transport of the pyrimidine nucleoside uridine. The sequence is that of Nucleoside permease NupC from Bacillus subtilis (strain 168).